Here is a 515-residue protein sequence, read N- to C-terminus: GMP synthase [glutamine-hydrolyzing] (515 aa).

The region spanning 10–200 (TIIVLDFGSQ…VFGVCGCSEG (191 aa)) is the Glutamine amidotransferase type-1 domain. Cys87 (nucleophile) is an active-site residue. Active-site residues include His174 and Glu176. In terms of domain architecture, GMPS ATP-PPase spans 201 to 390 (WNMENFIEVE…LGIPDEIVWR (190 aa)). An ATP-binding site is contributed by 228–234 (SGGVDSS).

As to quaternary structure, homodimer.

The catalysed reaction is XMP + L-glutamine + ATP + H2O = GMP + L-glutamate + AMP + diphosphate + 2 H(+). The protein operates within purine metabolism; GMP biosynthesis; GMP from XMP (L-Gln route): step 1/1. Its function is as follows. Catalyzes the synthesis of GMP from XMP. This is GMP synthase [glutamine-hydrolyzing] from Bacillus cereus (strain ATCC 14579 / DSM 31 / CCUG 7414 / JCM 2152 / NBRC 15305 / NCIMB 9373 / NCTC 2599 / NRRL B-3711).